The primary structure comprises 258 residues: Thrombin-like enzyme CPI-enzyme 2 (258 aa).

Residues 1–18 (MVLIRVLANLLILQLSYA) form the signal peptide. Residues 19 to 24 (QKSSEL) constitute a propeptide that is removed on maturation. The Peptidase S1 domain occupies 25 to 249 (VIGGDECNIN…YTDWIENIIA (225 aa)). 6 disulfide bridges follow: Cys-31-Cys-163, Cys-50-Cys-66, Cys-98-Cys-256, Cys-142-Cys-210, Cys-174-Cys-189, and Cys-200-Cys-225. Asn-44 carries an N-linked (GlcNAc...) asparagine glycan. The Charge relay system role is filled by His-65. 2 N-linked (GlcNAc...) asparagine glycosylation sites follow: Asn-79 and Asn-103. Asp-110 (charge relay system) is an active-site residue. N-linked (GlcNAc...) asparagine glycosylation is present at Asn-121. The Charge relay system role is filled by Ser-204.

The protein belongs to the peptidase S1 family. Snake venom subfamily. Monomer. N-glycosylated. Expressed by the venom gland.

The protein resides in the secreted. Its function is as follows. Thrombin-like snake venom serine protease that cleaves fibrinogen beta (FGB) releasing fibrinopeptide B. Promotes capillary permeability-increasing activity through the release of peptides from the beta-chain of fibrinogen. The sequence is that of Thrombin-like enzyme CPI-enzyme 2 from Gloydius ussuriensis (Ussuri mamushi).